The sequence spans 305 residues: Glycine--tRNA ligase alpha subunit (305 aa).

The protein belongs to the class-II aminoacyl-tRNA synthetase family. In terms of assembly, tetramer of two alpha and two beta subunits.

The protein resides in the cytoplasm. The catalysed reaction is tRNA(Gly) + glycine + ATP = glycyl-tRNA(Gly) + AMP + diphosphate. This is Glycine--tRNA ligase alpha subunit from Streptococcus pneumoniae (strain ATCC 700669 / Spain 23F-1).